We begin with the raw amino-acid sequence, 84 residues long: UPF0473 protein CLJ_B2791 (84 aa).

This sequence belongs to the UPF0473 family.

This Clostridium botulinum (strain 657 / Type Ba4) protein is UPF0473 protein CLJ_B2791.